A 504-amino-acid chain; its full sequence is Histidine--tRNA ligase (504 aa).

This sequence belongs to the class-II aminoacyl-tRNA synthetase family. Homodimer.

Its subcellular location is the cytoplasm. The enzyme catalyses tRNA(His) + L-histidine + ATP = L-histidyl-tRNA(His) + AMP + diphosphate + H(+). The chain is Histidine--tRNA ligase (hisS) from Rhizobium meliloti (strain 1021) (Ensifer meliloti).